The chain runs to 119 residues: Large ribosomal subunit protein eL8 (119 aa).

It belongs to the eukaryotic ribosomal protein eL8 family. As to quaternary structure, part of the 50S ribosomal subunit. Probably part of the RNase P complex.

It localises to the cytoplasm. Functionally, multifunctional RNA-binding protein that recognizes the K-turn motif in ribosomal RNA, the RNA component of RNase P, box H/ACA, box C/D and box C'/D' sRNAs. This Archaeoglobus fulgidus (strain ATCC 49558 / DSM 4304 / JCM 9628 / NBRC 100126 / VC-16) protein is Large ribosomal subunit protein eL8.